The following is a 474-amino-acid chain: Tubulin gamma-1 chain (474 aa).

Position 142 to 148 (142 to 148 (AGGTGSG)) interacts with GTP.

It belongs to the tubulin family. Gamma-tubulin complex is composed of gamma-tubulin and GCP proteins.

Its subcellular location is the cytoplasm. The protein resides in the cytoskeleton. It localises to the microtubule organizing center. It is found in the nucleus. The protein localises to the cell cortex. In terms of biological role, tubulin is the major constituent of microtubules. The gamma chain is found at microtubule organizing centers (MTOC) such as the spindle poles, suggesting that it is involved in the minus-end nucleation of microtubule assembly. Its function is as follows. Gamma-tubulin complex is essential for the control of microtubular network remodeling in the course of initiation and development of giant-feeding cells, and for the successful reproduction of nematodes (e.g. Meloidogyne spp.) in their plant hosts. This Arabidopsis thaliana (Mouse-ear cress) protein is Tubulin gamma-1 chain (TUBG1).